Consider the following 611-residue polypeptide: UvrABC system protein C (611 aa).

A GIY-YIG domain is found at 19-97 (QRPGVYRMVD…IKELRPRYNV (79 aa)). Residues 207-242 (NQVIEELGARMEAASERLEFEAAAQYRDRIQALQAV) form the UVR domain.

The protein belongs to the UvrC family. Interacts with UvrB in an incision complex.

The protein resides in the cytoplasm. Its function is as follows. The UvrABC repair system catalyzes the recognition and processing of DNA lesions. UvrC both incises the 5' and 3' sides of the lesion. The N-terminal half is responsible for the 3' incision and the C-terminal half is responsible for the 5' incision. The chain is UvrABC system protein C from Alkalilimnicola ehrlichii (strain ATCC BAA-1101 / DSM 17681 / MLHE-1).